The primary structure comprises 314 residues: MLESPHIPVLPSEVISLLQQTKNPNPQWFLDGTAGEGGHSKLILKTFPEAKLILIDRDAVMLERAKKEILKEIGSLDRVHAFQMNFSEVDSELLQEVGCPSLDGALVDLGVSLFHFLHSGRGFTFKNDEPLDMRLEANIGGKTAADVVNYSSVLHLKKVFWEYGEERWALKIANNIVQTRHKKKFGTNTDLVKLVEASIPRKFWPKESHPATRIFQALRIEVNEELVHAEKGIRALAQCLGIGGVLTCISFHSLEDRIVKWTFRDLKDNGPFEILTKKPILPSETEIKENRASRSAKLRGLMKINPIKESRWEK.

S-adenosyl-L-methionine is bound by residues 37-39 (GGH), D56, F86, D108, and H115.

This sequence belongs to the methyltransferase superfamily. RsmH family.

It localises to the cytoplasm. It carries out the reaction cytidine(1402) in 16S rRNA + S-adenosyl-L-methionine = N(4)-methylcytidine(1402) in 16S rRNA + S-adenosyl-L-homocysteine + H(+). Its function is as follows. Specifically methylates the N4 position of cytidine in position 1402 (C1402) of 16S rRNA. This is Ribosomal RNA small subunit methyltransferase H from Leptospira biflexa serovar Patoc (strain Patoc 1 / ATCC 23582 / Paris).